Reading from the N-terminus, the 563-residue chain is Arginine--tRNA ligase (563 aa).

Residues Pro120–His130 carry the 'HIGH' region motif.

The protein belongs to the class-I aminoacyl-tRNA synthetase family. As to quaternary structure, monomer.

It localises to the cytoplasm. It carries out the reaction tRNA(Arg) + L-arginine + ATP = L-arginyl-tRNA(Arg) + AMP + diphosphate. The protein is Arginine--tRNA ligase of Clostridium botulinum (strain 657 / Type Ba4).